The following is a 370-amino-acid chain: Tomoregulin-1 (370 aa).

The first 36 residues, 1 to 36 (MDGLHPASWMLLLGSLAFWSASSLLLFSLALPGARA), serve as a signal peptide directing secretion. Over 37-320 (SNQLLSECHN…VPSRQKLTHV (284 aa)) the chain is Extracellular. Asparagine 53 is a glycosylation site (N-linked (GlcNAc...) asparagine). 2 consecutive Kazal-like domains span residues 88 to 135 (ICQF…PCFS) and 179 to 227 (VCNI…SCIE). Cystine bridges form between cysteine 89-cysteine 119, cysteine 93-cysteine 112, cysteine 101-cysteine 133, cysteine 180-cysteine 211, cysteine 184-cysteine 204, cysteine 193-cysteine 225, cysteine 265-cysteine 278, cysteine 273-cysteine 289, and cysteine 291-cysteine 300. An EGF-like domain is found at 261–301 (NYIPCSENYNGYCVHGKCELSYSSQKASCRCDSGYTGQYCD). The chain crosses the membrane as a helical span at residues 321–341 (LIAAIIGAVQIAIIVAIVMCI). Topologically, residues 342-370 (TRKCPKNNRGRRQKQNLGHFSSDTSSRMV) are cytoplasmic. The segment at 349-370 (NRGRRQKQNLGHFSSDTSSRMV) is disordered. Over residues 356–370 (QNLGHFSSDTSSRMV) the composition is skewed to polar residues.

Belongs to the tomoregulin family. As to quaternary structure, interacts with cripto. In terms of tissue distribution, expressed at highest levels in brain, and at lower levels in neuroendocrine tissues. Present in neurons from the diencephalon (at protein level).

It is found in the cell membrane. Inhibits nodal/nr-1 and bmp signaling during neural patterning through interaction with cripto. The polypeptide is Tomoregulin-1 (tmeff1) (Xenopus laevis (African clawed frog)).